The sequence spans 611 residues: Rho-related BTB domain-containing protein 3 (611 aa).

The rho-like stretch occupies residues 1–175; that stretch reads MSIHIVALGN…KELGATYLEL (175 aa). BTB domains follow at residues 254–356 and 420–487; these read VDVV…QWEE and ADVV…CPAG. An interaction with Rab9 region spans residues 420–611; the sequence is ADVVFEIQGA…HSRKCRCLVM (192 aa).

In terms of assembly, interacts with RAB9A and RAB9B (at lower level compared to RAB9A-binding). Interacts with M6PRBP1/TIP47.

It is found in the golgi apparatus. In terms of biological role, rab9-regulated ATPase required for endosome to Golgi transport. Involved in transport vesicle docking at the Golgi complex, possibly by participating in release M6PRBP1/TIP47 from vesicles to permit their efficient docking and fusion at the Golgi. Specifically binds Rab9, but not other Rab proteins. Has low intrinsic ATPase activity due to autoinhibition, which is relieved by Rab9. This Mus musculus (Mouse) protein is Rho-related BTB domain-containing protein 3 (Rhobtb3).